The primary structure comprises 3183 residues: MEAEDLSKTEDRPEDPGFQNEGQSPAVKPSFSLEGQSPGPSVLWDMLEQKFLDYQQLMPRNPEERRKNLLSLLPLFLKAWEHSVGIICFRSLQRLAEDVSDQLAQEIQQALAGKPAEQARAAAGQLLQWKSDADQDGNLLLKSVYVLTGTDSETLGRVVDSGLPALLLQCLYLFFAFPVEKDDLLESDVQGQRMFVQMLLNICSESQGLEGLLSGSELQSLLIATTCLREHSCLFWKQPTFCVLRAISKAQSPSVIQYLRTADCVRLSVQNLSKLADTLPAPEVSEAVSLILNFVRDSYPISSALLLEFENGEGYPLLLKVLLRYNGLTQGVVEPHLEELIELVMWLTTCGRSELKVFDSVTYPQLEGFKFHQEASGVTVKNLQAFQVLQNLFHRASDSVLCIQVLLAIKTMWAWNPRNFFLLEWTLQPISQFAEIIPLKPTPVQEHFFQLLETLVFKLLYVPHEVLAKVQRLIKESSELSCTLVALRSILRITASDRLFTDIFRDSGLLGLLLAQLRKQAKIMRKSGNKECSPDVQDPERELTYVMLSTVVTLLQGSVRNAVVLKDHGMVPFIKIFLDDECYRGPSLSILEQLSVINAEEYMSIIVGALCSSTQGELQLKLDLLKSLLRILETPKGHAAFRVSSGFNGLLSLLSDLEGSLQVPEVTTCGAVSPSQTLELVLHTLCVVSAALHLDPVNEHFFRSNGLFEKLAEDLCLLGCFGTPEEERTRWDSSSDMKARPFMDLLSCAFSSSCQFPPRLQSCLQILSFLESMASGTLHLRGDLMEPARAGQEPSVDAQKAEAGGRQGKFKQWPDMEDRMDEGDVMIMHPGIICIMVRLLPRLYLEDHPQLSEEIQCSVARHLLSLVKSEKNRQVMCEAGMLRTLMTFCPRTLSTGGSDLHSILIRIFEKLGSQAIEPDVLRQFLGLGIRPPRSAAVKSLHLPPGHEDNPGCSGSCAATAEKPTDSSPRPGGSQALRPSWASQYSATALQTTLSLISMTSPRNLQPQRAALTPSFVEFDMSSEGYGCLFTPTLSTVMGTSTEHSISGGTGSGAPRPFPPPGGLTFSCWFLISRQANVMEGHPLRFLTLVRHLARTEQPFVCFSISLCMDDLSLVVSTEEKEFQPLDAMEPEDEAEPSAGRQLQVRCSQLLTCGQWYHLAVVVSKEMKRNCSVTTYLDGQAIGSAKMLYIQALPGSFFSMDPSSFVDVYGYIGTPRVWKQKSSLTWRLGPAYLFEEDISADTLALIIKLGPRYCGNFQAVHLQGEDPDGEATPLIAEERVSFGLYVPSSSITSIMNIRNTYNEVDSRLIAKEMNISSRDNATPVFLLRNCAGHLSGPLRTLGAVAVGQLGVRVFHSSPAASSLDYIGGPAILLGLISLATDDHTMYAAMKVLHSVLTSNAMCDYLMQHICGYQILAFLLRKKTSFLNHRIFQLILSVAGTAELGFRPSAVTNMCIFQHVLCNFELWTNTADNLELTLFSHLLEILQSPREGPRNAEVAHQAQLLPKLLFLFNEPSLALSKVSTIIAILGCQLKGHFNIQDLLRVGLFVIYTLKPSSVNERQICLDGAQDPSRPAGSQTSGKAIWLRNQLLEMLFGVISSSQLHLTSELKEQVFLSLGPDWFLLLLQGHLHPSTTTLALKLLLYFLSSPPLRGRFRDGLSAGCWVENCMDGVDIVMDNLKSRPAVPDQSPCLLPGFRVLNDFLAYHVLIPEVYLIVSSFFLQTPLTELTNGPRENLDLMLQWLLQKHHQQEVLQAGLCIEGALLLLGMLKAIMNQPPAGSGDGAWEQTLPSSVLQFLRLVHRSYPQDSAWRTPDFLQTVAIITFPLETQKETTSESSRNTSSPGASAEASHAAEGFQASFQPHPALRQLREFMQVLLRELLLGGSNPKQWLPLEVILEASPDGATSQQKRDFQTEVLLSTMDIFQVPSGDGMPTLRGSKEPLPNAEAGAVPSLASVSYFTQKLVEKIYSGVFSADPRHILLFITEHIIAVIENPSSQKDTVMSALYSSLNKVILHCLSKPQQSLSECLGLLTILDFLQEHWDIIFATYNSNVSFLLCLMHCLLLLNARSYPEGFGLEPKPRITPYHQVFLSPNEEVKDKKEEGLPSLGDVQHSIQKSVRALWQQLVAQRRQTLEDAFKIDLSVKAGEIEVKIEEITPLWEETMLRAWQHYLASEKKSLASRSSVMHHSKVTSWSGSLSSAMRLMPGRQAKDPECRAEDFVSCIENYRRKGQELYASIYKDYVQRRKSGSIKAATAWARMREQLFGELGLWGQMTESTRCSRWELDGREGPARMRKRIRHLLAWEPLNLGYKESQEGKGDVSQTNTGNQVFMTADELTTEEAESRPDEVGVDCTQLTFFPALHESLHSEDFLELCRERQVILQELLDGEKVSQKVPMVIVQGHLVSEGILLFGQHHFYICENFTLSPTGDVYCTHHCLSNISDPFIFNMCSKDRSSDHYSCQRHAYSDLRELRQARFLLQDIALEIFFQNGYSKLLVFYNSDRSKALKSFSTFQPSLKGKGTTEDPFNLRKHPGFDRTMLQRWQKREISNFEYLMYLNTLAGRTYNDYMQYPVFPWVLADYTSEMLNLTNPKTFRDLSKPMGAQTKERKLKFTQRFKDVEKIEGDMTVQCHYYTHYSSAIIVASYLVRMPPFTQAFCSLQGGSFDVADRMFHSVKSTWESASKENMSDVRELTPEFFYLPEFLTNCNAVEFGCMQDGTTLGDVQLPPWADGDPRKFISLHRQALESDFVSSNLHHWIDLIFGYKQQGPAAVEAVNTFHPYFYGDRIDLGSITDPLIKSTILGFISNFGQVPKQIFTKPHPSRNTTGKNPGPGKDASTPVGLPGHSQSFLHSLPALRPSQVTVKDMYLFSLGSESPKGAIGHIVPTEKSILAVEKNKLLMPPLWNRTFSWGFDDFSCCLGSYGSDKILMTFENLAAWGPCLCAVCPSPTMIVTSGASAVVCIWELSLVKGRPRGLKLRQALYGHTQAVTCLTASVTFSLLVSGSQDRTCILWDLDHLSRVACLPVHREGISAIAISDVSGTIVSCAGAHLSLWNVNGQPLASITTAWGPEGTITCCCIVEGPAWDASHVIITGSKDGMVRIWKTEDVKMPVPRQAVMEEPSTEPLSPRGHKWAKNLALSRELDVSVALSGKPSKASPAVTALAITRNQSKLLVGDEKGRIFCWSADG.

Basic and acidic residues predominate over residues Met-1 to Asp-15. 4 disordered regions span residues Met-1–Ser-37, Ala-790–Lys-811, Lys-938–Arg-977, and Lys-1828–Glu-1852. Positions Ser-1832 to Glu-1852 are enriched in low complexity. A BEACH-type PH domain is found at Leu-2383 to Ser-2508. In terms of domain architecture, BEACH spans Asn-2525 to Arg-2819. The segment at Phe-2812–Val-2836 is disordered. 5 WD repeats span residues Leu-2930 to Arg-2969, Gly-2979 to Cys-3018, Val-3021 to Thr-3060, Thr-3070 to Pro-3108, and Lys-3150 to Gly-3183.

As to quaternary structure, interacts with HSP90AB1. Highly expressed in immune tissues, especially B lymphocytes.

It localises to the early endosome. It is found in the endoplasmic reticulum. In terms of biological role, plays a critical role in the regulation of cDC1-mediated cross-presentation of viral and tumor antigens in dendritic cells. Mechanistically, acts near the plasma membrane and interacts with endosomal membranes to promote endosomal-to-cytosol antigen trafficking. Also plays a role in B-cell survival through regulation of autophagy. The chain is WD repeat- and FYVE domain-containing protein 4 from Mus musculus (Mouse).